A 531-amino-acid chain; its full sequence is MSSKHATETARRRTFAIISHPDAGKTTITEKLLLFGGAIQLAGTVKGRKAARHATSDWMELEKQRGISVTSSVMQFPYKGRIVNLLDTPGHEDFSEDTYRTLTAVDSALMVIDVAKGVEERTIKLMDVCRMRDTPIMTFINKLDREGREPIDLLDEVEQVLKIQCAPVTWPIGMGKRFKGVYHIHNDAVHLYSPTHGGKIQHGEVIQGLDNPRLDELLGGQAAELREELELVMGASHSFDKAEYLAGRQTPVFFGSAINNFGVQELLDDFVEHAPGPLPRATESRTVDPAEETFSGFVFKIQANMDPQHRDRIAFLRVCSGTFSKGMKVHQVRIKRDVKISDALTFMASDREHVEEAYPGDIIGLHNHGTIRIGDTFTQGEQLIFTGIPNFAPELFRRAHLRDPLKMKQLQKGLQQLCEEGATQLFKPLTNNDLILGAVGVLQFDVVAHRLKAEYNVDASFENVNVQTARWVSCDNARKFEEFQEKAAANLAIDHGGDLVYIAPTRVNLQMAQEKWPEVRFHATREHGVAA.

The tr-type G domain maps to 10–278; sequence ARRRTFAIIS…DFVEHAPGPL (269 aa). GTP-binding positions include 19-26, 87-91, and 141-144; these read SHPDAGKT, DTPGH, and NKLD.

It belongs to the TRAFAC class translation factor GTPase superfamily. Classic translation factor GTPase family. PrfC subfamily.

It is found in the cytoplasm. Its function is as follows. Increases the formation of ribosomal termination complexes and stimulates activities of RF-1 and RF-2. It binds guanine nucleotides and has strong preference for UGA stop codons. It may interact directly with the ribosome. The stimulation of RF-1 and RF-2 is significantly reduced by GTP and GDP, but not by GMP. The chain is Peptide chain release factor 3 from Thioalkalivibrio sulfidiphilus (strain HL-EbGR7).